The following is a 343-amino-acid chain: Phosphate acyltransferase (343 aa).

The protein belongs to the PlsX family. As to quaternary structure, homodimer. Probably interacts with PlsY.

The protein resides in the cytoplasm. It catalyses the reaction a fatty acyl-[ACP] + phosphate = an acyl phosphate + holo-[ACP]. The protein operates within lipid metabolism; phospholipid metabolism. Functionally, catalyzes the reversible formation of acyl-phosphate (acyl-PO(4)) from acyl-[acyl-carrier-protein] (acyl-ACP). This enzyme utilizes acyl-ACP as fatty acyl donor, but not acyl-CoA. This Neorickettsia sennetsu (strain ATCC VR-367 / Miyayama) (Ehrlichia sennetsu) protein is Phosphate acyltransferase.